The sequence spans 856 residues: Facilitated trehalose transporter Tret1 (856 aa).

Disordered regions lie at residues 1–29 (MSGRDNRGAGGGGGGHQPLSNAMGKLKEK) and 62–202 (DPFL…KATS). The Cytoplasmic segment spans residues 1 to 389 (MSGRDNRGAG…LEVYRPTTNP (389 aa)). Residues 69–80 (VSPQRHPQTVRT) show a composition bias toward polar residues. The segment covering 133 to 142 (EIREHRDRQQ) has biased composition (basic and acidic residues). Polar residues predominate over residues 170 to 180 (GNSNTNSNKAA). Residues S247, S248, S249, S319, and S321 each carry the phosphoserine modification. Residues 326–345 (LTSRQHFQQQRSISTDSRKS) are disordered. A compositionally biased stretch (polar residues) spans 329-340 (RQHFQQQRSIST). Residues 390 to 410 (IFIWTQVIAALSVSLGSLVVG) form a helical membrane-spanning segment. Residues 411–439 (FVSAYTSPALVSMSDPNITSFTVTKDAGS) are Extracellular-facing. N427 carries N-linked (GlcNAc...) asparagine glycosylation. Residues 440–460 (WVGGIMPLAGLVGGVAGGPLI) form a helical membrane-spanning segment. Residues 461–472 (EYMGRRNTILAT) lie on the Cytoplasmic side of the membrane. A helical membrane pass occupies residues 473–493 (AVPFIVSSLLIACAVNVAMVL). The Extracellular portion of the chain corresponds to 494-496 (CGR). The helical transmembrane segment at 497–517 (FLAGFCVGIASLSLPVYLGET) threads the bilayer. At 518–527 (VQPEVRGTLG) the chain is on the cytoplasmic side. The helical transmembrane segment at 528 to 548 (LLPTAFGNIGILVCFVAGSFM) threads the bilayer. A glycan (N-linked (GlcNAc...) asparagine) is linked at N549. Residues 549 to 551 (NWS) are Extracellular-facing. A helical transmembrane segment spans residues 552-572 (MLAFLGAALPVPFLILMFLIP). Residues 573–635 (ETPRWYVSRG…ELLKRNNLKP (63 aa)) are Cytoplasmic-facing. Residues 636–656 (LSISLGLMFFQQFSGINAVIF) traverse the membrane as a helical segment. Residues 657 to 672 (YTVQIFKDAGSTIDGN) are Extracellular-facing. Residues 673-693 (VCTIIVGVVNFVATFIGILLI) form a helical membrane-spanning segment. Residues 694–699 (DRAGRK) lie on the Cytoplasmic side of the membrane. A helical membrane pass occupies residues 700 to 720 (ILLYASDIAMVLTLFVLGGFF). Over 721-739 (YCKAHGPDVSHLGWLPLTC) the chain is Extracellular. Residues 740-760 (FVVYILGFSVGFGPIPWLMMG) form a helical membrane-spanning segment. The Cytoplasmic portion of the chain corresponds to 761-766 (EILPAK). Residues 767–787 (IRGAAASVATSFNWTCTFVVT) form a helical membrane-spanning segment. The Extracellular portion of the chain corresponds to 788–800 (KTFQDLVGSLGAH). Residues 801 to 821 (GAFWLFGAICFVGLFFVILYV) form a helical membrane-spanning segment. The Cytoplasmic segment spans residues 822-856 (PETQGKTLEDIERKMMGRVRRMSSVANIKPLSFNM). Phosphoserine occurs at positions 844 and 845.

Belongs to the major facilitator superfamily. Sugar transporter (TC 2.A.1.1) family. Trehalose transporter subfamily.

It is found in the cell membrane. Low-capacity facilitative transporter for trehalose. Does not transport maltose, sucrose or lactose. Mediates the bidirectional transfer of trehalose. Responsible for the transport of trehalose synthesized in the fat body and the incorporation of trehalose into other tissues that require a carbon source, thereby regulating trehalose levels in the hemolymph. The chain is Facilitated trehalose transporter Tret1 from Drosophila yakuba (Fruit fly).